Consider the following 171-residue polypeptide: Endoribonuclease YbeY (171 aa).

Zn(2+) is bound by residues H126, H130, and H136.

The protein belongs to the endoribonuclease YbeY family. Requires Zn(2+) as cofactor.

Its subcellular location is the cytoplasm. Single strand-specific metallo-endoribonuclease involved in late-stage 70S ribosome quality control and in maturation of the 3' terminus of the 16S rRNA. The chain is Endoribonuclease YbeY from Rhizobium etli (strain ATCC 51251 / DSM 11541 / JCM 21823 / NBRC 15573 / CFN 42).